The following is a 498-amino-acid chain: ATP synthase subunit beta, chloroplastic (498 aa).

Position 172 to 179 (172 to 179 (GGAGVGKT)) interacts with ATP.

The protein belongs to the ATPase alpha/beta chains family. F-type ATPases have 2 components, CF(1) - the catalytic core - and CF(0) - the membrane proton channel. CF(1) has five subunits: alpha(3), beta(3), gamma(1), delta(1), epsilon(1). CF(0) has four main subunits: a(1), b(1), b'(1) and c(9-12).

It is found in the plastid. It localises to the chloroplast thylakoid membrane. The enzyme catalyses ATP + H2O + 4 H(+)(in) = ADP + phosphate + 5 H(+)(out). Produces ATP from ADP in the presence of a proton gradient across the membrane. The catalytic sites are hosted primarily by the beta subunits. This chain is ATP synthase subunit beta, chloroplastic, found in Asarum canadense (Wild ginger).